The sequence spans 173 residues: MKTKEVVDDITMNRAITRITYEIIERNKELNQVVLAGIKTRGVHLAHRIQKRLAQLEQIDIPVAEIDTKPFRDDKKSQEADSTLIPVDITDRQVILIDDVLYTGRTIRAAIDNLVSHGRPSRVSLAVLVDRGHRELPIRTDYIGKNIPTSRTEEIIVEMTETDGQDRILIKGE.

The PRPP-binding motif lies at 94-106; sequence VILIDDVLYTGRT.

Belongs to the purine/pyrimidine phosphoribosyltransferase family. PyrR subfamily. In terms of assembly, homodimer and homohexamer; in equilibrium.

The enzyme catalyses UMP + diphosphate = 5-phospho-alpha-D-ribose 1-diphosphate + uracil. Functionally, regulates transcriptional attenuation of the pyrimidine nucleotide (pyr) operon by binding in a uridine-dependent manner to specific sites on pyr mRNA. This disrupts an antiterminator hairpin in the RNA and favors formation of a downstream transcription terminator, leading to a reduced expression of downstream genes. Its function is as follows. Also displays a weak uracil phosphoribosyltransferase activity which is not physiologically significant. The sequence is that of Bifunctional protein PyrR from Streptococcus gordonii (strain Challis / ATCC 35105 / BCRC 15272 / CH1 / DL1 / V288).